The chain runs to 316 residues: MCTGLRFTDDQGNLYFGRNLDVGQDYGEGVIITPGNYPLPYKFLDNTTTKKAVIGMGIVVDGYPSYFDCYNEDGLGIAGLNFPHFAKFSDGPIDGKINLASYEIMLWVTQNFTHVSEVKEALKNVNLVNEAINTSFAVAPLHWIISDSDEAIIVEVSKQYGMKVFDDKVGVLTNSPDFNWHLTNLGNYTGLNPHDATAQSWNGQKVAPWGVGTGSLGLPGDSIPADRFVKAAYLNVNYPTAKGEKANVAKFFNILKSVAMIKGSVVNDQGKDEYTVYTACYSSGSKTYYCNFEDDFELKTYKLDDHTMNSTSLVTY.

Cysteine 2 (nucleophile) is an active-site residue. Deoxycholate contacts are provided by cysteine 2 and arginine 18. Taurine is bound at residue asparagine 81.

Belongs to the peptidase C59 family.

The enzyme catalyses cholate + taurine = taurocholate + H2O. It catalyses the reaction taurodeoxycholate + H2O = deoxycholate + taurine. It carries out the reaction taurochenodeoxycholate + H2O = chenodeoxycholate + taurine. The catalysed reaction is glycocholate + H2O = cholate + glycine. Its pathway is lipid metabolism; bile acid biosynthesis. Its activity is regulated as follows. Glycocholate hydrolysis is inhibited by various previously identified BSH inhibitors, including KIO(3), NaHIO(3), NaIO(4), CuCl(2), menadione, riboflavin, gossypetin, and the antibiotics oxytetracycline, demeclocycline hydrochloride and methacycline hydrochloride. In terms of biological role, bile salt hydrolase that catalyzes the deconjugation of glycine- and taurine-linked bile salts, which occurs naturally in the intestines of animals, releasing amino acid residues and deconjugated bile salts (bile acids). Can hydrolyze the amide bond in the bile salts taurocholate (TCA), taurodeoxycholate (TDCA), taurochenodeoxycholate (TCDCA), taurohyodeoxycholate (THDCA) and tauroursodeoxycholate (TUDCA). Oh et al. did not detect activity with the glycine-conjugated bile salts glycocholate (GCA), glycodeoxycholate (GDCA) and glycochenodeoxycholate (GCDCA). However, a later study shows activity toward glycocholate (GCA). The sequence is that of Conjugated bile acid hydrolase from Lactobacillus acidophilus.